We begin with the raw amino-acid sequence, 756 residues long: LIM domain and actin-binding protein 1 (756 aa).

Met-1 is subject to N-acetylmethionine. Ser-15 and Ser-55 each carry phosphoserine. Residues 44–56 (AAEEANMEKRRSN) are compositionally biased toward basic and acidic residues. Disordered stretches follow at residues 44-183 (AAEE…SNKI) and 204-377 (QTKI…AVKK). Low complexity predominate over residues 107–118 (EVASSSASGVEA). Residue Ser-130 is modified to Phosphoserine. Over residues 140–173 (RIKDTEHLKDHSAESKKMENCLAESRHEVGKPET) the composition is skewed to basic and acidic residues. Positions 164–166 (SRH) match the Required for interaction with NPC1L1 motif. A Phosphoserine modification is found at Ser-221. Phosphotyrosine is present on Tyr-225. Phosphoserine is present on residues Ser-226 and Ser-238. A compositionally biased stretch (basic and acidic residues) spans 245-254 (EKSESRRNLE). Ser-259 is subject to Phosphoserine. The span at 274–287 (VSKQSSSTNYTNEL) shows a compositional bias: polar residues. Residues 294–303 (IKTHKLEQKE) show a composition bias toward basic and acidic residues. Ser-339, Ser-346, Ser-358, Ser-365, and Ser-370 each carry phosphoserine. Residues 384-444 (ETCVECQKTV…KPHFNQLFKS (61 aa)) enclose the LIM zinc-binding domain. Lys-435 carries the N6-succinyllysine modification. At Ser-486 the chain carries Phosphoserine. The interval 489-509 (VEDAPIAKVGVLTASMEAKAS) is required for interaction with MYO5B. Residues 508-726 (ASSQLEKEDK…TTQKQKSQDV (219 aa)) form a disordered region. Positions 512-523 (LEKEDKPAETKK) are enriched in basic and acidic residues. The span at 533–542 (ELSSSGSALE) shows a compositional bias: low complexity. A compositionally biased stretch (basic and acidic residues) spans 552 to 563 (WPPEDEVSKPEA). A phosphoserine mark is found at Ser-597, Ser-600, Ser-605, and Ser-613. Over residues 627 to 637 (AERKQMEKASA) the composition is skewed to basic and acidic residues. A compositionally biased stretch (polar residues) spans 638–651 (SEKNGSVGKTTWPS). Positions 652–667 (KESRGGEAAGRSKEVQ) are enriched in basic and acidic residues. The span at 691-721 (LQQQSPLEPKSKNWSSFADNTSAKEFTTQKQ) shows a compositional bias: polar residues. A phosphoserine mark is found at Ser-695, Ser-723, and Ser-738.

In terms of assembly, interacts with NPC1L1; bridges NPC1L1 with MYO5B. Interacts with MYO5B; bridges MYO5B with NPC1L1. Interacts with PXN; this complex stabilizes actin dynamics. Interacts with F-actin and G-actin. Interacts with LUZP1 (via C-terminus); both proteins restrict ciliation and may work together to regulate this process. Binds RAB40B (GTP-bound); interaction influences LIMA1 subcellular localization in lamellipodia during cell migration. In terms of processing, phosphorylation of the C-terminal region by MAPK1/MAPK3 reduces its association with F-actin and contributes to actin filament reorganization and enhances cell motility. Ubiquitinated by the ECS(RAB40B) complex leading to its degradation. As to expression, widely expressed. Highest levels of isoform 2 are expressed in lung, spleen and small intestine. Isoform 2 is expressed at higher levels than isoform 1 in most tissues except liver, fat and kidney. Isoform 1 and isoform 2 are expressed at low levels in skeletal muscle, heart, stomach and lymph.

It localises to the cytoplasm. The protein localises to the cell junction. The protein resides in the focal adhesion. It is found in the cytoskeleton. Its subcellular location is the stress fiber. It localises to the cell membrane. The protein localises to the cell projection. The protein resides in the ruffle. It is found in the lamellipodium. Functionally, actin-binding protein involved in actin cytoskeleton regulation and dynamics. Increases the number and size of actin stress fibers and inhibits membrane ruffling. Inhibits actin filament depolymerization. Bundles actin filaments, delays filament nucleation and reduces formation of branched filaments. Acts as a negative regulator of primary cilium formation. Plays a role in cholesterol homeostasis. Influences plasma cholesterol levels through regulation of intestinal cholesterol absorption. May act as a scaffold protein by regulating NPC1L1 transportation, an essential protein for cholesterol absorption, to the plasma membrane by recruiting MYO5B to NPC1L1, and thus facilitates cholesterol uptake. This is LIM domain and actin-binding protein 1 from Sus scrofa (Pig).